We begin with the raw amino-acid sequence, 195 residues long: Dihydroneopterin triphosphate diphosphatase (195 aa).

The active-site Proton acceptor is the Asp-73.

The protein belongs to the HAM1 NTPase family. Requires Mn(2+) as cofactor.

The catalysed reaction is 7,8-dihydroneopterin 3'-triphosphate + H2O = 7,8-dihydroneopterin 3'-phosphate + diphosphate + H(+). It functions in the pathway cofactor biosynthesis; tetrahydrofolate biosynthesis. Its function is as follows. Pyrophosphatase involved in the biosynthesis of tetrahydrofolate. Catalyzes the hydrolysis of dihydroneopterin triphosphate (DHNTP) to dihydroneopterin monophosphate (DHNMP) and pyrophosphate. Shows a strict substrate specificity. Has only weak activity with GTP, ITP, XTP and dTTP, and cannot use ATP, UTP, CTP, NAD(+), NADH, diadenosine triphosphate, diadenosine tetraphosphate, ADP-ribose and UDP-glucose. This chain is Dihydroneopterin triphosphate diphosphatase, found in Limosilactobacillus reuteri (strain DSM 20016) (Lactobacillus reuteri).